Consider the following 305-residue polypeptide: Large ribosomal subunit protein uL3c (305 aa).

Residues 1–84 (MAAILPTFSI…AVGGLEIKMM (84 aa)) constitute a chloroplast transit peptide. Residues 228-256 (SHRALGSIGAGTTPGHVYKGKKMPGRMGG) form a disordered region.

As to quaternary structure, component of the chloroplast large ribosomal subunit (LSU). Mature 70S chloroplast ribosomes of higher plants consist of a small (30S) and a large (50S) subunit. The 30S small subunit contains 1 molecule of ribosomal RNA (16S rRNA) and 24 different proteins. The 50S large subunit contains 3 rRNA molecules (23S, 5S and 4.5S rRNA) and 33 different proteins.

Its subcellular location is the plastid. It localises to the chloroplast. In terms of biological role, component of the chloroplast ribosome (chloro-ribosome), a dedicated translation machinery responsible for the synthesis of chloroplast genome-encoded proteins, including proteins of the transcription and translation machinery and components of the photosynthetic apparatus. This Spinacia oleracea (Spinach) protein is Large ribosomal subunit protein uL3c (RPL3).